Consider the following 453-residue polypeptide: Ribulose bisphosphate carboxylase large chain (453 aa).

The propeptide occupies 1–2 (MS). P3 is modified (N-acetylproline). The residue at position 14 (K14) is an N6,N6,N6-trimethyllysine. Substrate-binding residues include N123 and T173. Catalysis depends on K175, which acts as the Proton acceptor. K177 is a substrate binding site. Positions 201, 203, and 204 each coordinate Mg(2+). An N6-carboxylysine modification is found at K201. H294 (proton acceptor) is an active-site residue. R295, H327, and S379 together coordinate substrate.

This sequence belongs to the RuBisCO large chain family. Type I subfamily. Heterohexadecamer of 8 large chains and 8 small chains; disulfide-linked. The disulfide link is formed within the large subunit homodimers. Requires Mg(2+) as cofactor. The disulfide bond which can form in the large chain dimeric partners within the hexadecamer appears to be associated with oxidative stress and protein turnover.

The protein localises to the plastid. The protein resides in the chloroplast. It catalyses the reaction 2 (2R)-3-phosphoglycerate + 2 H(+) = D-ribulose 1,5-bisphosphate + CO2 + H2O. The enzyme catalyses D-ribulose 1,5-bisphosphate + O2 = 2-phosphoglycolate + (2R)-3-phosphoglycerate + 2 H(+). Functionally, ruBisCO catalyzes two reactions: the carboxylation of D-ribulose 1,5-bisphosphate, the primary event in carbon dioxide fixation, as well as the oxidative fragmentation of the pentose substrate in the photorespiration process. Both reactions occur simultaneously and in competition at the same active site. The sequence is that of Ribulose bisphosphate carboxylase large chain from Valantia muralis (Wall valantia).